The sequence spans 283 residues: Cyclin-C (283 aa).

The Cyclin N-terminal domain maps to D20 to I151. Residues T252–S283 are disordered. The span at P272–S283 shows a compositional bias: polar residues. The residue at position 275 (S275) is a Phosphoserine.

It belongs to the cyclin family. Cyclin C subfamily. Component of the Mediator complex, which is composed of MED1, MED4, MED6, MED7, MED8, MED9, MED10, MED11, MED12, MED13, MED13L, MED14, MED15, MED16, MED17, MED18, MED19, MED20, MED21, MED22, MED23, MED24, MED25, MED26, MED27, MED29, MED30, MED31, CCNC, CDK8 and CDC2L6/CDK11. The MED12, MED13, CCNC and CDK8 subunits form a distinct module termed the CDK8 module. Mediator containing the CDK8 module is less active than Mediator lacking this module in supporting transcriptional activation. Individual preparations of the Mediator complex lacking one or more distinct subunits have been variously termed ARC, CRSP, DRIP, PC2, SMCC and TRAP. The cylin/CDK pair formed by CCNC/CDK8 also associates with the large subunit of RNA polymerase II.

It localises to the nucleus. In terms of biological role, component of the Mediator complex, a coactivator involved in regulated gene transcription of nearly all RNA polymerase II-dependent genes. Mediator functions as a bridge to convey information from gene-specific regulatory proteins to the basal RNA polymerase II transcription machinery. Mediator is recruited to promoters by direct interactions with regulatory proteins and serves as a scaffold for the assembly of a functional preinitiation complex with RNA polymerase II and the general transcription factors. Binds to and activates cyclin-dependent kinase CDK8 that phosphorylates the CTD (C-terminal domain) of the large subunit of RNA polymerase II (RNAp II), which may inhibit the formation of a transcription initiation complex. The protein is Cyclin-C (Ccnc) of Mus musculus (Mouse).